The sequence spans 150 residues: Large ribosomal subunit protein uL13 (150 aa).

The protein belongs to the universal ribosomal protein uL13 family. Part of the 50S ribosomal subunit.

In terms of biological role, this protein is one of the early assembly proteins of the 50S ribosomal subunit, although it is not seen to bind rRNA by itself. It is important during the early stages of 50S assembly. The protein is Large ribosomal subunit protein uL13 of Chlamydia muridarum (strain MoPn / Nigg).